A 209-amino-acid chain; its full sequence is MKSILGKKIGMTQIFNEDGSVVPVTVIEAGPMVVTQIKTKEKEGYNAIQVGYIEKKEKHVNQPMRGHFGKAGVSFKKHLREFKINDDEQFNLGDEIKLDIFQDGDVVDVIGISKGKGTQGAIVRHNYSRGPMGHGSKSHRVAGARSAGSYPARVFKGRKGSGKMGHDRVTVQNLKIVKVDNERNLLLIKGAVPGNKGGVVTVREAIKSK.

The segment at 127-147 (YSRGPMGHGSKSHRVAGARSA) is disordered.

The protein belongs to the universal ribosomal protein uL3 family. Part of the 50S ribosomal subunit. Forms a cluster with proteins L14 and L19.

Its function is as follows. One of the primary rRNA binding proteins, it binds directly near the 3'-end of the 23S rRNA, where it nucleates assembly of the 50S subunit. In Finegoldia magna (strain ATCC 29328 / DSM 20472 / WAL 2508) (Peptostreptococcus magnus), this protein is Large ribosomal subunit protein uL3.